Consider the following 383-residue polypeptide: Chaperone protein DnaJ (383 aa).

A J domain is found at 5-70; that stretch reads DYYEALGVAR…QKRAAYDQFG (66 aa). The CR-type zinc-finger motif lies at 139-217; that stretch reads GTEVQIRVPT…CGGRGRVQSQ (79 aa). Zn(2+) is bound by residues C152, C155, C169, C172, C191, C194, C205, and C208. CXXCXGXG motif repeat units lie at residues 152 to 159, 169 to 176, 191 to 198, and 205 to 212; these read CDACDGKG, CPTCKGHG, CPRCGGSG, and CRKCGGRG. The disordered stretch occupies residues 230 to 249; that stretch reads TGDRIRLSGEGEPGENGGPP.

Belongs to the DnaJ family. Homodimer. Requires Zn(2+) as cofactor.

It localises to the cytoplasm. In terms of biological role, participates actively in the response to hyperosmotic and heat shock by preventing the aggregation of stress-denatured proteins and by disaggregating proteins, also in an autonomous, DnaK-independent fashion. Unfolded proteins bind initially to DnaJ; upon interaction with the DnaJ-bound protein, DnaK hydrolyzes its bound ATP, resulting in the formation of a stable complex. GrpE releases ADP from DnaK; ATP binding to DnaK triggers the release of the substrate protein, thus completing the reaction cycle. Several rounds of ATP-dependent interactions between DnaJ, DnaK and GrpE are required for fully efficient folding. Also involved, together with DnaK and GrpE, in the DNA replication of plasmids through activation of initiation proteins. The polypeptide is Chaperone protein DnaJ (Alkalilimnicola ehrlichii (strain ATCC BAA-1101 / DSM 17681 / MLHE-1)).